A 211-amino-acid polypeptide reads, in one-letter code: Small ribosomal subunit protein uS3 (211 aa).

The KH type-2 domain maps to 38–106 (LRKFIKKAFY…NIELNIIEVK (69 aa)).

The protein belongs to the universal ribosomal protein uS3 family. As to quaternary structure, part of the 30S ribosomal subunit. Forms a tight complex with proteins S10 and S14.

Functionally, binds the lower part of the 30S subunit head. Binds mRNA in the 70S ribosome, positioning it for translation. The polypeptide is Small ribosomal subunit protein uS3 (Ehrlichia canis (strain Jake)).